We begin with the raw amino-acid sequence, 462 residues long: MRLLDSVTKEKIKLDKKDISIYLCGPTVYDDAHLGHARSSVCFDLLRRVLLAQGNRVKFARNYTDIDDKILKKMTQSGQTLEEITEFYIKSYEEDMRALNVLDPDFKPRATHYITAMLDLIKKLAKDGFVYTLEDGIYFDTSKDEKYLSLSNRNLEENISRLSNEVQKRNESDFVLWKFDENFYENEFGKGRPGWHTECVAMIDSIFENTLDIHAGGIDLLFPHHENEAAQCRCGCKRKLANIWLHNGFVKIDGEKMSKSLNNSFFIKDALKEFMGEALRFYLLSSHYRSHFNYSLSDLENAKKRLDKFYRLKKRLDLGEISDFDVLNDIEIKSEIAKQILEILNDDLNVSKALALLDDFISSANLELDKESKNKILKQNIKEALSELAKIFGFGFMDTTLYFQWGVSKEEREEIEKLILERTEAKKNKDFNTADAIREQLNSKKITLLDTPNGTIWEKINA.

Cys-24 is a binding site for Zn(2+). A 'HIGH' region motif is present at residues 26-36; that stretch reads PTVYDDAHLGH. 3 residues coordinate Zn(2+): Cys-199, His-224, and Glu-228. The 'KMSKS' region signature appears at 256–260; that stretch reads KMSKS. Lys-259 serves as a coordination point for ATP.

Belongs to the class-I aminoacyl-tRNA synthetase family. In terms of assembly, monomer. Requires Zn(2+) as cofactor.

It localises to the cytoplasm. The catalysed reaction is tRNA(Cys) + L-cysteine + ATP = L-cysteinyl-tRNA(Cys) + AMP + diphosphate. This chain is Cysteine--tRNA ligase, found in Campylobacter jejuni subsp. jejuni serotype O:23/36 (strain 81-176).